The following is a 536-amino-acid chain: Dual specificity calcium/calmodulin-dependent 3',5'-cyclic nucleotide phosphodiesterase 1B (536 aa).

The disordered stretch occupies residues 1-20 (MELSPRSPPEMLEESDCPSP). Phosphoserine is present on residues S7 and S15. 2 calmodulin-binding regions span residues 27–47 (PSKK…KQLE) and 118–141 (EKPK…MFRR). Residues 146–503 (VGPTYSTAVL…QKWKERAASG (358 aa)) enclose the PDEase domain. H223 (proton donor) is an active-site residue. Zn(2+)-binding residues include H227, H263, D264, and D370. D264 is a Mg(2+) binding site. 2 disordered regions span residues 447–474 (LADE…VGDP) and 494–536 (QKWK…GNLD). The segment covering 455 to 464 (KNQPSFQWRQ) has biased composition (polar residues). 2 positions are modified to phosphoserine: S466 and S514.

This sequence belongs to the cyclic nucleotide phosphodiesterase family. PDE1 subfamily. As to quaternary structure, homodimer. Requires Zn(2+) as cofactor. It depends on Mg(2+) as a cofactor.

Its subcellular location is the cytoplasm. The protein resides in the cytosol. It catalyses the reaction a nucleoside 3',5'-cyclic phosphate + H2O = a nucleoside 5'-phosphate + H(+). The catalysed reaction is 3',5'-cyclic GMP + H2O = GMP + H(+). The enzyme catalyses 3',5'-cyclic AMP + H2O = AMP + H(+). Its activity is regulated as follows. Type I PDE are activated by the binding of calmodulin in the presence of Ca(2+). Cyclic nucleotide phosphodiesterase with a dual specificity for the second messengers cAMP and cGMP, which are key regulators of many important physiological processes. Has a preference for cGMP as a substrate. The protein is Dual specificity calcium/calmodulin-dependent 3',5'-cyclic nucleotide phosphodiesterase 1B of Homo sapiens (Human).